Consider the following 162-residue polypeptide: Photosystem II extrinsic protein V (162 aa).

Residues 1–26 (MFNKNFWTSIIIGCLFCTITYSGVNA) form the signal peptide. Heme c contacts are provided by Cys62, Cys65, His66, and His117.

This sequence belongs to the cytochrome c family. PsbV subfamily. PSII is composed of 1 copy each of membrane proteins PsbA, PsbB, PsbC, PsbD, PsbE, PsbF, PsbH, PsbI, PsbJ, PsbK, PsbL, PsbM, PsbT, PsbX, PsbY, PsbZ, Psb30/Ycf12, at least 3 peripheral proteins of the oxygen-evolving complex and a large number of cofactors. It forms dimeric complexes. Heme c is required as a cofactor.

Its subcellular location is the plastid. The protein localises to the cyanelle thylakoid membrane. In terms of biological role, one of the extrinsic, lumenal subunits of photosystem II (PSII). PSII is a light-driven water plastoquinone oxidoreductase, using light energy to abstract electrons from H(2)O, generating a proton gradient subsequently used for ATP formation. The extrinsic proteins stabilize the structure of photosystem II oxygen-evolving complex (OEC), the ion environment of oxygen evolution and protect the OEC against heat-induced inactivation. This is Photosystem II extrinsic protein V from Cyanophora paradoxa.